We begin with the raw amino-acid sequence, 566 residues long: Acyl-CoA synthetase ALT10 (566 aa).

196-207 provides a ligand contact to AMP; that stretch reads MLFTSGTTGAPK. The segment at 473–551 is AMP-binding; it reads EVEHAALSHE…DAVHYNRTGK (79 aa).

It belongs to the ATP-dependent AMP-binding enzyme family.

It participates in mycotoxin biosynthesis. In terms of biological role, acyl-CoA synthetase; part of the gene cluster that mediates the biosynthesis of the host-selective toxins (HSTs) AAL-toxins, sphinganine-analog mycotoxins responsible for Alternaria stem canker on tomato by the tomato pathotype. The biosynthesis starts with the polyketide synthase ALT1-catalyzed C-16 carbon chain assembly from one starter acetyl-CoA unit with malonyl-CoA extender units. ALT1 also selectively transfers methyl groups at the first and the third cycle of chain elongation for AAL toxin. The C-16 polyketide chain is released from the enzyme by a nucleophilic attack of a carbanion, which is derived from R-carbon of glycin by decarboxylation, on the carbonyl carbon of polyketide acyl chain. This step is probably catalyzed by a pyridoxal 5'-phosphate-dependent aminoacyl transferase ALT4. The respective functions of the other enzymes encoded by the cluster have still to be elucidated. The sphingosine N-acyltransferase-like protein ALT7 seems not to act as a resistance/self-tolerance factor against the toxin in the toxin biosynthetic gene cluster, contrary to what is expected. The protein is Acyl-CoA synthetase ALT10 of Alternaria alternata (Alternaria rot fungus).